The primary structure comprises 498 residues: Histidine--tRNA ligase (498 aa).

Belongs to the class-II aminoacyl-tRNA synthetase family. In terms of assembly, homodimer.

The protein localises to the cytoplasm. The enzyme catalyses tRNA(His) + L-histidine + ATP = L-histidyl-tRNA(His) + AMP + diphosphate + H(+). This is Histidine--tRNA ligase from Bartonella quintana (strain Toulouse) (Rochalimaea quintana).